We begin with the raw amino-acid sequence, 205 residues long: Ribosome maturation factor RimP (205 aa).

Belongs to the RimP family.

The protein resides in the cytoplasm. In terms of biological role, required for maturation of 30S ribosomal subunits. This Sinorhizobium fredii (strain NBRC 101917 / NGR234) protein is Ribosome maturation factor RimP.